We begin with the raw amino-acid sequence, 212 residues long: Peptide methionine sulfoxide reductase MsrA (212 aa).

Cys-52 is an active-site residue.

It belongs to the MsrA Met sulfoxide reductase family.

It carries out the reaction L-methionyl-[protein] + [thioredoxin]-disulfide + H2O = L-methionyl-(S)-S-oxide-[protein] + [thioredoxin]-dithiol. The enzyme catalyses [thioredoxin]-disulfide + L-methionine + H2O = L-methionine (S)-S-oxide + [thioredoxin]-dithiol. Functionally, has an important function as a repair enzyme for proteins that have been inactivated by oxidation. Catalyzes the reversible oxidation-reduction of methionine sulfoxide in proteins to methionine. In Escherichia coli O17:K52:H18 (strain UMN026 / ExPEC), this protein is Peptide methionine sulfoxide reductase MsrA.